The chain runs to 80 residues: ATP synthase subunit c (80 aa).

2 helical membrane-spanning segments follow: residues 11 to 31 and 54 to 74; these read IAAT…IGIL and FIVM…GLYI.

It belongs to the ATPase C chain family. As to quaternary structure, F-type ATPases have 2 components, F(1) - the catalytic core - and F(0) - the membrane proton channel. F(1) has five subunits: alpha(3), beta(3), gamma(1), delta(1), epsilon(1). F(0) has three main subunits: a(1), b(2) and c(10-14). The alpha and beta chains form an alternating ring which encloses part of the gamma chain. F(1) is attached to F(0) by a central stalk formed by the gamma and epsilon chains, while a peripheral stalk is formed by the delta and b chains.

It is found in the cell membrane. F(1)F(0) ATP synthase produces ATP from ADP in the presence of a proton or sodium gradient. F-type ATPases consist of two structural domains, F(1) containing the extramembraneous catalytic core and F(0) containing the membrane proton channel, linked together by a central stalk and a peripheral stalk. During catalysis, ATP synthesis in the catalytic domain of F(1) is coupled via a rotary mechanism of the central stalk subunits to proton translocation. Its function is as follows. Key component of the F(0) channel; it plays a direct role in translocation across the membrane. A homomeric c-ring of between 10-14 subunits forms the central stalk rotor element with the F(1) delta and epsilon subunits. The polypeptide is ATP synthase subunit c (Baumannia cicadellinicola subsp. Homalodisca coagulata).